Here is a 404-residue protein sequence, read N- to C-terminus: 4-hydroxy-3-methylbut-2-en-1-yl diphosphate synthase (ferredoxin) (404 aa).

Cys-313, Cys-316, Cys-347, and Glu-354 together coordinate [4Fe-4S] cluster.

The protein belongs to the IspG family. [4Fe-4S] cluster is required as a cofactor.

It carries out the reaction (2E)-4-hydroxy-3-methylbut-2-enyl diphosphate + 2 oxidized [2Fe-2S]-[ferredoxin] + H2O = 2-C-methyl-D-erythritol 2,4-cyclic diphosphate + 2 reduced [2Fe-2S]-[ferredoxin] + H(+). The protein operates within isoprenoid biosynthesis; isopentenyl diphosphate biosynthesis via DXP pathway; isopentenyl diphosphate from 1-deoxy-D-xylulose 5-phosphate: step 5/6. Its function is as follows. Converts 2C-methyl-D-erythritol 2,4-cyclodiphosphate (ME-2,4cPP) into 1-hydroxy-2-methyl-2-(E)-butenyl 4-diphosphate. This is 4-hydroxy-3-methylbut-2-en-1-yl diphosphate synthase (ferredoxin) from Crocosphaera subtropica (strain ATCC 51142 / BH68) (Cyanothece sp. (strain ATCC 51142)).